Consider the following 436-residue polypeptide: 3-ketoacyl-CoA thiolase (436 aa).

The active-site Acyl-thioester intermediate is Cys-99. Active-site proton acceptor residues include His-392 and Cys-422.

Belongs to the thiolase-like superfamily. Thiolase family. As to quaternary structure, heterotetramer of two alpha chains (FadJ) and two beta chains (FadI).

It is found in the cytoplasm. It catalyses the reaction an acyl-CoA + acetyl-CoA = a 3-oxoacyl-CoA + CoA. Its pathway is lipid metabolism; fatty acid beta-oxidation. Catalyzes the final step of fatty acid oxidation in which acetyl-CoA is released and the CoA ester of a fatty acid two carbons shorter is formed. This chain is 3-ketoacyl-CoA thiolase, found in Shewanella loihica (strain ATCC BAA-1088 / PV-4).